A 437-amino-acid chain; its full sequence is GTPase Era, mitochondrial (437 aa).

A mitochondrion-targeting transit peptide spans 1-43; the sequence is MAASSWRGAVLLRTVSGLWQAGPDAAREWMTRLPSLLGFQQRC. The Era-type G domain occupies 112-330; the sequence is RVLRVVLLGA…QYLLAQARPG (219 aa). Positions 120–127 are G1; the sequence is GAPNAGKS. Position 120–127 (120–127) interacts with GTP; sequence GAPNAGKS. The interval 146–150 is G2; that stretch reads HTTRS. The G3 stretch occupies residues 167 to 170; that stretch reads DTPG. 167-171 serves as a coordination point for GTP; the sequence is DTPGL. Position 173 is a phosphoserine (Ser173). 236–239 serves as a coordination point for GTP; it reads NKVD. The tract at residues 236 to 239 is G4; sequence NKVD. Residues 264-296 are disordered; it reads LKTKQALRSRPDTHCPSPAAQGPNPQPVRDPQQ. The segment at 308–310 is G5; it reads LSA. The 78-residue stretch at 360–437 folds into the KH type-2 domain; the sequence is LPEEVPYNVQ…QLRLSVKLLK (78 aa).

Belongs to the TRAFAC class TrmE-Era-EngA-EngB-Septin-like GTPase superfamily. Era GTPase family.

It localises to the mitochondrion matrix. The protein resides in the mitochondrion inner membrane. Functionally, probable GTPase that plays a role in the mitochondrial ribosomal small subunit assembly. Specifically binds the 12S mitochondrial rRNA (12S mt-rRNA) to a 33 nucleotide section delineating the 3' terminal stem-loop region. May act as a chaperone that protects the 12S mt-rRNA on the 28S mitoribosomal subunit during ribosomal small subunit assembly. The chain is GTPase Era, mitochondrial (ERAL1) from Bos taurus (Bovine).